We begin with the raw amino-acid sequence, 489 residues long: Rhamnulokinase (489 aa).

Position 13–17 (13–17 (ASSGR)) interacts with ATP. Cys68 and Cys222 are disulfide-bonded. Substrate is bound by residues Gly83 and 236 to 238 (HDT). The active-site Proton acceptor is the Asp237. Thr259 is an ATP binding site. A substrate-binding site is contributed by Asn296. Gln304 is an ATP binding site. A disulfide bridge connects residues Cys353 and Cys370. Gly402 is an ATP binding site. An intrachain disulfide couples Cys413 to Cys417.

It belongs to the rhamnulokinase family. As to quaternary structure, monomer. Mg(2+) serves as cofactor.

It carries out the reaction L-rhamnulose + ATP = L-rhamnulose 1-phosphate + ADP + H(+). The protein operates within carbohydrate degradation; L-rhamnose degradation; glycerone phosphate from L-rhamnose: step 2/3. Functionally, involved in the catabolism of L-rhamnose (6-deoxy-L-mannose). Catalyzes the transfer of the gamma-phosphate group from ATP to the 1-hydroxyl group of L-rhamnulose to yield L-rhamnulose 1-phosphate. In Escherichia coli (strain 55989 / EAEC), this protein is Rhamnulokinase.